The chain runs to 103 residues: Cell division protein FtsB (103 aa).

Residues 1–3 (MGK) are Cytoplasmic-facing. Residues 4 to 21 (LTLLLLALLVWLQYSLWF) form a helical membrane-spanning segment. Residues 22-103 (GKNGIHDYSR…RAATAGQTHR (82 aa)) are Periplasmic-facing. Residues 33-62 (NDDVVAQQATNAKLKARNDQLFAEIDDLNG) adopt a coiled-coil conformation.

Belongs to the FtsB family. As to quaternary structure, part of a complex composed of FtsB, FtsL and FtsQ.

The protein resides in the cell inner membrane. Essential cell division protein. May link together the upstream cell division proteins, which are predominantly cytoplasmic, with the downstream cell division proteins, which are predominantly periplasmic. The protein is Cell division protein FtsB of Salmonella agona (strain SL483).